A 1246-amino-acid polypeptide reads, in one-letter code: HMG2-induced ER-remodeling protein 1 (1246 aa).

Disordered stretches follow at residues 19–241 (KGKR…GSLT), 263–288 (HHIQ…LPPI), and 816–836 (MPDA…KDEK). Positions 27–41 (KSAASTRTSEATTTS) are enriched in low complexity. Polar residues predominate over residues 58–95 (TIASPQRPLSGQNVNNELSNSKPAVSAEKVSQQGQVPT). S102 bears the Phosphoserine mark. T128 is subject to Phosphothreonine. Low complexity-rich tracts occupy residues 154–163 (RSSSISTSLN) and 211–230 (SKIS…PSSS). The span at 271 to 282 (SGREQDSPHSES) shows a compositional bias: basic and acidic residues. Phosphoserine is present on S277. S1013 bears the Phosphoserine mark. Composition is skewed to polar residues over residues 1109–1133 (SSRH…TPDS) and 1200–1215 (SRSP…QQKA). Disordered regions lie at residues 1109-1157 (SSRH…LPKI) and 1192-1224 (SLYG…LVED). A Phosphothreonine modification is found at T1130. S1200, S1204, and S1207 each carry phosphoserine.

It belongs to the GIP3/HER1 family. As to quaternary structure, may interact with ribosomes.

The protein resides in the cytoplasm. Functionally, required for HMG2-induced endoplasmic reticulum-remodeling. This is HMG2-induced ER-remodeling protein 1 (HER1) from Saccharomyces cerevisiae (strain ATCC 204508 / S288c) (Baker's yeast).